We begin with the raw amino-acid sequence, 182 residues long: Glutathione-regulated potassium-efflux system ancillary protein KefG (182 aa).

This sequence belongs to the NAD(P)H dehydrogenase (quinone) family. KefG subfamily. In terms of assembly, interacts with KefB.

The protein localises to the cell inner membrane. It catalyses the reaction a quinone + NADH + H(+) = a quinol + NAD(+). It carries out the reaction a quinone + NADPH + H(+) = a quinol + NADP(+). Regulatory subunit of a potassium efflux system that confers protection against electrophiles. Required for full activity of KefB. In Yersinia pestis bv. Antiqua (strain Nepal516), this protein is Glutathione-regulated potassium-efflux system ancillary protein KefG.